Reading from the N-terminus, the 455-residue chain is Ribulose bisphosphate carboxylase large chain (455 aa).

Lysine 5 is modified (N6,N6,N6-trimethyllysine). The substrate site is built by asparagine 114 and threonine 164. The active-site Proton acceptor is the lysine 166. Residue lysine 168 participates in substrate binding. Mg(2+) contacts are provided by lysine 192, aspartate 194, and glutamate 195. Lysine 192 is subject to N6-carboxylysine. Histidine 285 (proton acceptor) is an active-site residue. Substrate contacts are provided by arginine 286, histidine 318, and serine 370.

This sequence belongs to the RuBisCO large chain family. Type I subfamily. Heterohexadecamer of 8 large chains and 8 small chains; disulfide-linked. The disulfide link is formed within the large subunit homodimers. The cofactor is Mg(2+). The disulfide bond which can form in the large chain dimeric partners within the hexadecamer appears to be associated with oxidative stress and protein turnover.

The protein resides in the plastid. The protein localises to the chloroplast. It carries out the reaction 2 (2R)-3-phosphoglycerate + 2 H(+) = D-ribulose 1,5-bisphosphate + CO2 + H2O. The enzyme catalyses D-ribulose 1,5-bisphosphate + O2 = 2-phosphoglycolate + (2R)-3-phosphoglycerate + 2 H(+). In terms of biological role, ruBisCO catalyzes two reactions: the carboxylation of D-ribulose 1,5-bisphosphate, the primary event in carbon dioxide fixation, as well as the oxidative fragmentation of the pentose substrate in the photorespiration process. Both reactions occur simultaneously and in competition at the same active site. This is Ribulose bisphosphate carboxylase large chain from Erythrina crista-galli (Cockspur coral tree).